The following is a 154-amino-acid chain: MQVIEGGINAAGKKFAIIVSRFNHFMVESLLDGAVQTLKHYGEVADDDITVVRVPGAYEMPVTAKRLASSGKYDAIIAVGAVIRGGTPHFEFVAGECNSGLGRVATEFDLPVAFGVITTDTLEQAIERSGSKAGNKGSEAALSALEMVNVLKQL.

5-amino-6-(D-ribitylamino)uracil is bound by residues Phe-22, 57-59, and 81-83; these read AYE and AVI. Residue 86 to 87 participates in (2S)-2-hydroxy-3-oxobutyl phosphate binding; the sequence is GT. His-89 serves as the catalytic Proton donor. Phe-114 contacts 5-amino-6-(D-ribitylamino)uracil. Arg-128 provides a ligand contact to (2S)-2-hydroxy-3-oxobutyl phosphate.

This sequence belongs to the DMRL synthase family. As to quaternary structure, forms an icosahedral capsid composed of 60 subunits, arranged as a dodecamer of pentamers.

The enzyme catalyses (2S)-2-hydroxy-3-oxobutyl phosphate + 5-amino-6-(D-ribitylamino)uracil = 6,7-dimethyl-8-(1-D-ribityl)lumazine + phosphate + 2 H2O + H(+). It functions in the pathway cofactor biosynthesis; riboflavin biosynthesis; riboflavin from 2-hydroxy-3-oxobutyl phosphate and 5-amino-6-(D-ribitylamino)uracil: step 1/2. In terms of biological role, catalyzes the formation of 6,7-dimethyl-8-ribityllumazine by condensation of 5-amino-6-(D-ribitylamino)uracil with 3,4-dihydroxy-2-butanone 4-phosphate. This is the penultimate step in the biosynthesis of riboflavin. This is 6,7-dimethyl-8-ribityllumazine synthase from Idiomarina loihiensis (strain ATCC BAA-735 / DSM 15497 / L2-TR).